We begin with the raw amino-acid sequence, 428 residues long: MLDPKFLRNELEVTAERLATRGFILDIAHLTQLEEKRKSLQVATEELQASRNAISKSIGQAKARGEDVEAIMAQVGDLGSQLDAKKIELAAVLEEVNAIAMSMPNLPDESAPIGADETENVEVRRWGTPRTFDFPIKDHIDLGEGLNGLDFKNAVKITGSRFIVMKGQVARLNRAIGQFMLDLHTTEHGYTEAYVPLLVNEASLLGTGQLPKFGEDLFHTKPATEEGQGLSLIPTAEVPLTNLVRDSIVDEDELPIKLTAHTACFRSEAGSYGKDTRGLIRQHQFDKVEMVQIVKPEDSMAALEALTGHAETVLQRLGLPYRTVILCTGDMGFGSSKTYDIEVWLPAQNTYREISSCSNMKDFQARRMQARYRVKADNKPALLHTLNGSGLAVGRTLVAILENYQNADGSITIPEVLRPYMGGLTQIG.

235 to 237 (TAE) serves as a coordination point for L-serine. 266 to 268 (RSE) contacts ATP. Glu289 is an L-serine binding site. 353–356 (EISS) contacts ATP. An L-serine-binding site is contributed by Ser389.

Belongs to the class-II aminoacyl-tRNA synthetase family. Type-1 seryl-tRNA synthetase subfamily. As to quaternary structure, homodimer. The tRNA molecule binds across the dimer.

It is found in the cytoplasm. It carries out the reaction tRNA(Ser) + L-serine + ATP = L-seryl-tRNA(Ser) + AMP + diphosphate + H(+). It catalyses the reaction tRNA(Sec) + L-serine + ATP = L-seryl-tRNA(Sec) + AMP + diphosphate + H(+). It participates in aminoacyl-tRNA biosynthesis; selenocysteinyl-tRNA(Sec) biosynthesis; L-seryl-tRNA(Sec) from L-serine and tRNA(Sec): step 1/1. Catalyzes the attachment of serine to tRNA(Ser). Is also able to aminoacylate tRNA(Sec) with serine, to form the misacylated tRNA L-seryl-tRNA(Sec), which will be further converted into selenocysteinyl-tRNA(Sec). The chain is Serine--tRNA ligase from Shewanella baltica (strain OS185).